The chain runs to 163 residues: 3-dehydroquinate dehydratase (163 aa).

Tyr28 functions as the Proton acceptor in the catalytic mechanism. The substrate site is built by Asn80, His86, and Asp93. His106 functions as the Proton donor in the catalytic mechanism. Substrate-binding positions include 107 to 108 (IS) and Arg117.

This sequence belongs to the type-II 3-dehydroquinase family. Homododecamer.

It carries out the reaction 3-dehydroquinate = 3-dehydroshikimate + H2O. Its pathway is metabolic intermediate biosynthesis; chorismate biosynthesis; chorismate from D-erythrose 4-phosphate and phosphoenolpyruvate: step 3/7. Its function is as follows. Catalyzes a trans-dehydration via an enolate intermediate. The protein is 3-dehydroquinate dehydratase of Bradyrhizobium sp. (strain BTAi1 / ATCC BAA-1182).